Consider the following 133-residue polypeptide: Profilin (133 aa).

Belongs to the profilin family.

Functionally, more likely to influence phosphoinositide metabolism than actin assembly. This Vaccinia virus (strain Tian Tan) (VACV) protein is Profilin.